The primary structure comprises 86 residues: Small ribosomal subunit protein bS16 (86 aa).

The protein belongs to the bacterial ribosomal protein bS16 family.

The protein is Small ribosomal subunit protein bS16 of Xanthomonas campestris pv. campestris (strain 8004).